A 305-amino-acid chain; its full sequence is PI-PLC X domain-containing protein 1 (305 aa).

An N-terminal signal peptide occupies residues 1–24; sequence MSMSTLRHFLWLGALLLATIQVSA. One can recognise a PI-PLC X-box domain in the interval 25–189; the sequence is LPTAQDLICN…RLIVFVDSKA (165 aa). Residues H53 and H97 contribute to the active site. A glycan (N-linked (GlcNAc...) asparagine) is linked at N237.

Its subcellular location is the secreted. The protein is PI-PLC X domain-containing protein 1 of Arthroderma benhamiae (strain ATCC MYA-4681 / CBS 112371) (Trichophyton mentagrophytes).